Consider the following 472-residue polypeptide: Protein translocase subunit SecD (472 aa).

A run of 6 helical transmembrane segments spans residues 8 to 28 (ILFT…PLSG), 300 to 320 (TIIN…IIFY), 325 to 347 (VIAD…WTGA), 353 to 375 (GIAG…YERI), 396 to 416 (VFST…VLFF), and 424 to 444 (GFAV…LVVS).

Belongs to the SecD/SecF family. SecD subfamily. In terms of assembly, forms a complex with SecF. Part of the essential Sec protein translocation apparatus which comprises SecA, SecYEG and auxiliary proteins SecDF. Other proteins may also be involved.

It localises to the cell inner membrane. Its function is as follows. Part of the Sec protein translocase complex. Interacts with the SecYEG preprotein conducting channel. SecDF uses the proton motive force (PMF) to complete protein translocation after the ATP-dependent function of SecA. In Petrotoga mobilis (strain DSM 10674 / SJ95), this protein is Protein translocase subunit SecD.